Consider the following 21-residue polypeptide: Cupiennin-6c (21 aa).

Ser21 is modified (serine amide).

In terms of tissue distribution, expressed by the venom gland.

The protein resides in the secreted. The sequence is that of Cupiennin-6c from Cupiennius salei (American wandering spider).